A 123-amino-acid chain; its full sequence is PTS-dependent dihydroxyacetone kinase, phosphotransferase subunit DhaM (123 aa).

The PTS EIIA type-4 domain maps to 2 to 123 (TYGIVIVSHS…EQLEKMLIEK (122 aa)). Residue His10 is the Tele-phosphohistidine intermediate; for EIIA activity of the active site.

Homodimer. The dihydroxyacetone kinase complex is composed of a homodimer of DhaM, a homodimer of DhaK and the subunit DhaL.

It catalyses the reaction dihydroxyacetone + phosphoenolpyruvate = dihydroxyacetone phosphate + pyruvate. It functions in the pathway polyol metabolism; glycerol degradation. Functionally, component of the dihydroxyacetone kinase complex, which is responsible for the phosphoenolpyruvate (PEP)-dependent phosphorylation of dihydroxyacetone. DhaM serves as the phosphoryl donor. Is phosphorylated by phosphoenolpyruvate in an EI- and HPr-dependent reaction, and a phosphorelay system on histidine residues finally leads to phosphoryl transfer to DhaL and dihydroxyacetone. This Lactococcus lactis subsp. lactis (strain IL1403) (Streptococcus lactis) protein is PTS-dependent dihydroxyacetone kinase, phosphotransferase subunit DhaM.